Consider the following 816-residue polypeptide: Phosphatidylinositol 4-kinase beta (816 aa).

Disordered stretches follow at residues 1-28 (MGDT…NGGS), 93-120 (PPTG…RRRR), and 249-318 (HRKR…SFSS). The residue at position 2 (glycine 2) is an N-acetylglycine. The interaction with ACBD3 stretch occupies residues 2–68 (GDTVVAPAPL…VKLSHGGVAS (67 aa)). A PIK helical domain is found at 49–242 (QKACQEVLQK…GTKLRRLILS (194 aa)). The residue at position 258 (serine 258) is a Phosphoserine. Phosphothreonine is present on threonine 263. Residues serine 266, serine 275, serine 277, serine 284, serine 294, serine 428, and serine 511 each carry the phosphoserine modification. Low complexity predominate over residues 278 to 294 (DATASISLSSSLKRTAS). Phosphothreonine occurs at positions 517 and 519. The PI3K/PI4K catalytic domain occupies 535-801 (EPWQEKVRRI…MVDGSMRSIT (267 aa)). A G-loop region spans residues 541 to 547 (VRRIREG). The interval 668–676 (QVKDRHNGN) is catalytic loop. The segment at 687 to 711 (HIDFGFILSSSPRNLGFETSAFKLT) is activation loop.

The protein belongs to the PI3/PI4-kinase family. Type III PI4K subfamily. As to quaternary structure, interacts with ARF1 and ARF3 in the Golgi complex, but not with ARF4, ARF5 or ARF6. Interacts with NCS1/FREQ in a calcium-independent manner. Interacts with CALN1/CABP8 and CALN2/CABP7; in a calcium-dependent manner; this interaction competes with NCS1/FREQ binding. Interacts with ACBD3. Interacts with ARMH3, YWHAB, YWHAE, YWHAG, YWHAH, YWHAQ, YWHAZ and SFN. Interacts with GGA2 (via VHS domain); the interaction is important for PI4KB location at the Golgi apparatus membrane. Interacts with ATG9A. The cofactor is Mg(2+). Requires Mn(2+) as cofactor.

The protein localises to the endomembrane system. It localises to the mitochondrion outer membrane. It is found in the rough endoplasmic reticulum membrane. The protein resides in the golgi apparatus. Its subcellular location is the golgi apparatus membrane. The enzyme catalyses a 1,2-diacyl-sn-glycero-3-phospho-(1D-myo-inositol) + ATP = a 1,2-diacyl-sn-glycero-3-phospho-(1D-myo-inositol 4-phosphate) + ADP + H(+). Its activity is regulated as follows. Inhibited by wortmannin. Increased kinase activity upon interaction with NCS1/FREQ. In terms of biological role, phosphorylates phosphatidylinositol (PI) in the first committed step in the production of the second messenger inositol-1,4,5,-trisphosphate (PIP). May regulate Golgi disintegration/reorganization during mitosis, possibly via its phosphorylation. Involved in Golgi-to-plasma membrane trafficking. May play an important role in the inner ear development. The sequence is that of Phosphatidylinositol 4-kinase beta (PI4KB) from Rhinolophus ferrumequinum (Greater horseshoe bat).